The following is a 692-amino-acid chain: Glycine--tRNA ligase beta subunit (692 aa).

The protein belongs to the class-II aminoacyl-tRNA synthetase family. As to quaternary structure, tetramer of two alpha and two beta subunits.

The protein localises to the cytoplasm. The enzyme catalyses tRNA(Gly) + glycine + ATP = glycyl-tRNA(Gly) + AMP + diphosphate. The sequence is that of Glycine--tRNA ligase beta subunit from Alteromonas mediterranea (strain DSM 17117 / CIP 110805 / LMG 28347 / Deep ecotype).